Here is a 665-residue protein sequence, read N- to C-terminus: Probable potassium transport system protein Kup (665 aa).

The next 12 membrane-spanning stretches (helical) occupy residues 15 to 35 (SFLI…LYVM), 48 to 68 (ITPD…TLLT), 100 to 120 (WLII…MLTP), 147 to 167 (IIII…HFGT), 173 to 193 (IFGP…IVNL), 219 to 239 (LGFF…ALYS), 251 to 271 (LTWP…AAWI), 292 to 312 (MMPS…AIIA), 348 to 368 (IYMP…VLYF), 378 to 398 (YGLS…NYLL), 403 to 423 (PLPI…SFLI), and 431 to 451 (KGGF…YIWI).

This sequence belongs to the HAK/KUP transporter (TC 2.A.72) family.

It localises to the cell membrane. It catalyses the reaction K(+)(in) + H(+)(in) = K(+)(out) + H(+)(out). In terms of biological role, transport of potassium into the cell. Likely operates as a K(+):H(+) symporter. This is Probable potassium transport system protein Kup from Clostridium perfringens (strain ATCC 13124 / DSM 756 / JCM 1290 / NCIMB 6125 / NCTC 8237 / Type A).